The primary structure comprises 183 residues: Endoribonuclease YbeY (183 aa).

Residues histidine 143, histidine 147, and histidine 153 each coordinate Zn(2+).

Belongs to the endoribonuclease YbeY family. It depends on Zn(2+) as a cofactor.

It localises to the cytoplasm. In terms of biological role, single strand-specific metallo-endoribonuclease involved in late-stage 70S ribosome quality control and in maturation of the 3' terminus of the 16S rRNA. The sequence is that of Endoribonuclease YbeY from Rickettsia bellii (strain RML369-C).